A 301-amino-acid polypeptide reads, in one-letter code: Glycine--tRNA ligase alpha subunit (301 aa).

This sequence belongs to the class-II aminoacyl-tRNA synthetase family. As to quaternary structure, tetramer of two alpha and two beta subunits.

Its subcellular location is the cytoplasm. It carries out the reaction tRNA(Gly) + glycine + ATP = glycyl-tRNA(Gly) + AMP + diphosphate. This Shewanella frigidimarina (strain NCIMB 400) protein is Glycine--tRNA ligase alpha subunit.